The sequence spans 68 residues: Large ribosomal subunit protein uL29 (68 aa).

It belongs to the universal ribosomal protein uL29 family.

This is Large ribosomal subunit protein uL29 from Streptococcus thermophilus (strain ATCC BAA-250 / LMG 18311).